A 580-amino-acid polypeptide reads, in one-letter code: Mucin-1 (580 aa).

Residues 1–22 (MTPDIQAPFLSLLLLFPVLTVA) form the signal peptide. Residues 23–489 (NVPTLTTSDS…GSGVPGWGIA (467 aa)) lie on the Extracellular side of the membrane. Polar residues predominate over residues 28-37 (TTSDSINPRR). Residues 28-359 (TTSDSINPRR…SIALSTSSNP (332 aa)) are disordered. Low complexity predominate over residues 38–88 (TTPVSTTQSSPTSSPTKETSWSTTTTLLTASSPAPSPAASPGHDGASTPTS). A run of 11 repeats spans residues 70-89 (PAPS…PTSS), 90-109 (PAPS…PTSS), 110-129 (PAPS…PTSS), 130-149 (PAPS…PTSS), 150-169 (PAPS…PTGS), 170-189 (PAPS…PTSS), 190-209 (PAPS…PTGS), 210-229 (PAPS…PTSS), 230-249 (PAPS…PTGS), 250-269 (PAPS…LTSS), and 270-289 (PAPS…PTSS). The tract at residues 70-289 (PAPSPAASPG…QHGASSPTSS (220 aa)) is 11 X 20 AA approximate tandem repeats of P-A-P-S-P-A-A-S-P-G-H-D-G-A-S-T-P-T-S-S. 3 O-linked (GalNAc...) serine glycosylation sites follow: Ser73, Ser77, and Ser84. Residues Thr85 and Thr87 are each glycosylated (O-linked (GalNAc...) threonine). Residues Ser88 and Ser89 are each glycosylated (O-linked (GalNAc...) serine). Low complexity-rich tracts occupy residues 96 to 108 (ASPG…TPTS), 116 to 128 (ASPG…TPTS), 136 to 148 (ASPG…TPTS), 156 to 168 (ASPG…SPTG), 176 to 188 (ASPG…TPTS), 196 to 208 (ASPG…SPTG), 216 to 228 (ASPG…TPTS), 236 to 248 (ASPG…SPTG), and 256 to 306 (ASPG…MVTS). Asn161 is a glycosylation site (N-linked (GlcNAc...) asparagine). Asn201 is a glycosylation site (N-linked (GlcNAc...) asparagine). A glycan (N-linked (GlcNAc...) asparagine) is linked at Asn241. Over residues 308–344 (HKGTSSRATMTPVSKGTPSSVPSSETAPTAASHITRT) the composition is skewed to polar residues. A compositionally biased stretch (low complexity) spans 345–357 (AASSPSIALSTSS). Residues 368 to 475 (RVSLYFLSFR…VSVYSAPFPS (108 aa)) form the SEA domain. N-linked (GlcNAc...) asparagine glycosylation is found at Asn384 and Asn460. Residues 490–510 (LLVLVCVLVALAIIYLIALVV) traverse the membrane as a helical segment. S-palmitoyl cysteine attachment occurs at residues Cys511 and Cys513. At 511–580 (CQCGRKKCEQ…TNLAATSANL (70 aa)) the chain is on the cytoplasmic side. The segment at 519–555 (EQLDVFPTLDAYHPMSEYSTYHTHGRYVPPGSTKRSP) is interaction with P53. Tyr530 carries the post-translational modification Phosphotyrosine; by PDGFR. Positions 530 to 533 (YHPM) match the Interaction with GRB2 motif. A Phosphotyrosine modification is found at Tyr539. The interval 544-563 (RYVPPGSTKRSPYEEVSAGN) is disordered. Position 545 is a phosphotyrosine; by PDGFR (Tyr545). Residues 550 to 557 (STKRSPYE) are required for interaction with GSK3B. Position 551 is a phosphothreonine; by PKC/PRKCD (Thr551). Ser554 is modified (phosphoserine; by GSK3-beta). Tyr556 is modified (phosphotyrosine; by CSK, EGFR and SRC). The Interaction with SRC and ESR1 signature appears at 556–559 (YEEV). Residues 560–568 (SAGNGGSNL) are required for interaction with beta- and gamma-catenins. Tyr570 carries the phosphotyrosine modification. Positions 570–572 (YTN) match the Required for interaction with AP1S2 motif.

As to quaternary structure, the alpha subunit forms a tight, non-covalent heterodimeric complex with the proteolytically-released beta subunit. Binds directly the SH2 domain of GRB2, and forms a MUC1/GRB2/SOS1 complex involved in RAS signaling. The cytoplasmic tail (MUC1CT) interacts with several proteins such as, SRC, CTNNB1 and ERBs. Interaction with the SH2 domain of CSK decreases interaction with GSK3B. Interacts with CTNNB1/beta-catenin and JUP/gamma-catenin and promotes cell adhesion. Interaction with JUP/gamma-catenin is induced by heregulin. Binds PRKCD, ERBB2, ERBB3 and ERBB4. Heregulin (HRG) stimulates the interaction with ERBB2 and, to a much lesser extent, the interaction with ERBB3 and ERBB4. Interacts with P53 in response to DNA damage. Interacts with KLF4. Interacts with estrogen receptor alpha/ESR1, through its DNA-binding domain, and stimulates its transcription activity. Binds ADAM17. Highly glycosylated (N- and O-linked carbohydrates and sialic acid). O-linked glycosylation consists mainly of GalNAc, galactose, and sialic acid. The ratio from pools of milk from different dairy breeds is GalNAc: GlcNAc:galactose:mannose:sialic acid is 14:1:10:1:15. In terms of processing, proteolytic cleavage in the SEA domain occurs in the endoplasmic reticulum by an autoproteolytic mechanism and requires the full-length SEA domain as well as requiring a Ser, Thr or Cys residue at the P + 1 site. Ectodomain shedding is mediated by ADAM17 in uterine epithelial cells. Post-translationally, dual palmitoylation on cysteine residues in the CQC motif is required for recycling from endosomes back to the plasma membrane. Phosphorylated on tyrosines and serine residues in the C-terminal. Phosphorylation on tyrosines in the C-terminal increases the nuclear location of MUC1 and beta-catenin. Phosphorylation by PKC delta induces binding of MUC1 to beta-catenin/CTNNB1 and thus decreases the formation of the beta-catenin/E-cadherin complex. Src-mediated phosphorylation inhibits interaction with GSK3B. Csk- or Src- or EGFR-mediated phosphorylation on Tyr-556 increases binding to beta-catenin/CTNNB1. GSK3B-mediated phosphorylation on Ser-554 decreases this interaction but restores the formation of the beta-cadherin/E-cadherin complex. On T-cell receptor activation, phosphorylated by LCK. PDGFR-mediated phosphorylation increases nuclear colocalization of MUC1CT and CTNNB1. As to expression, expressed on the apical surface of epithelia cells, and on the milk fat globule membrane (MGGM).

The protein localises to the apical cell membrane. Its subcellular location is the cell membrane. The protein resides in the cytoplasm. It localises to the nucleus. Functionally, the alpha subunit has cell adhesive properties. May provide a protective layer on epithelial cells against bacterial and enzyme attack. The beta subunit contains a C-terminal domain which is involved in cell signaling, through phosphorylations and protein-protein interactions. Modulates signaling in ERK, Src and NF-kappa-B pathways. In activated T-cells, influences directly or indirectly the Ras/MAPK pathway. Promotes tumor progression. Regulates P53-mediated transcription and determines cell fate in the genotoxic stress response. Binds, together with KLF4, the PE21 promoter element of P53 and represses P53 activity. The protein is Mucin-1 (MUC1) of Bos taurus (Bovine).